The chain runs to 86 residues: Small ribosomal subunit protein bS20 (86 aa).

Belongs to the bacterial ribosomal protein bS20 family.

Functionally, binds directly to 16S ribosomal RNA. The protein is Small ribosomal subunit protein bS20 of Bifidobacterium adolescentis (strain ATCC 15703 / DSM 20083 / NCTC 11814 / E194a).